Here is a 498-residue protein sequence, read N- to C-terminus: Pyruvate kinase (498 aa).

Arg53 contributes to the substrate binding site. Residues Asn55, Ser57, Asp87, and Thr88 each contribute to the K(+) site. ATP is bound at residue 55–58 (NFSH). Positions 94 and 178 each coordinate ATP. Glu240 serves as a coordination point for Mg(2+). Substrate is bound by residues Gly263, Asp264, and Thr296. Asp264 lines the Mg(2+) pocket.

This sequence belongs to the pyruvate kinase family. As to quaternary structure, homotetramer. The cofactor is Mg(2+). Requires K(+) as cofactor.

The enzyme catalyses pyruvate + ATP = phosphoenolpyruvate + ADP + H(+). It participates in carbohydrate degradation; glycolysis; pyruvate from D-glyceraldehyde 3-phosphate: step 5/5. This is Pyruvate kinase (PYK) from Trypanoplasma borreli.